Reading from the N-terminus, the 62-residue chain is Small ribosomal subunit protein eS27 (62 aa).

Residues Cys-17, Cys-20, Cys-36, and Cys-39 each coordinate Zn(2+). Residues 17-39 form a C4-type zinc finger; the sequence is CPDCENEQVVFERASTVVECTVC.

The protein belongs to the eukaryotic ribosomal protein eS27 family. Part of the 30S ribosomal subunit. Zn(2+) serves as cofactor.

In Methanoculleus marisnigri (strain ATCC 35101 / DSM 1498 / JR1), this protein is Small ribosomal subunit protein eS27.